The chain runs to 283 residues: Glutamyl-Q tRNA(Asp) synthetase (283 aa).

L-glutamate contacts are provided by residues arginine 5–threonine 9 and glutamate 41. A 'HIGH' region motif is present at residues proline 8–serine 18. The Zn(2+) site is built by cysteine 97, cysteine 99, tyrosine 111, and cysteine 115. The L-glutamate site is built by tyrosine 168 and arginine 186. A 'KMSKS' region motif is present at residues lysine 224–glutamine 228. Lysine 227 is a binding site for ATP.

It belongs to the class-I aminoacyl-tRNA synthetase family. GluQ subfamily. Zn(2+) is required as a cofactor.

Its function is as follows. Catalyzes the tRNA-independent activation of glutamate in presence of ATP and the subsequent transfer of glutamate onto a tRNA(Asp). Glutamate is transferred on the 2-amino-5-(4,5-dihydroxy-2-cyclopenten-1-yl) moiety of the queuosine in the wobble position of the QUC anticodon. The protein is Glutamyl-Q tRNA(Asp) synthetase of Idiomarina loihiensis (strain ATCC BAA-735 / DSM 15497 / L2-TR).